The chain runs to 300 residues: Pantoate--beta-alanine ligase (300 aa).

Residue 43–50 (MGYLHSGH) participates in ATP binding. His50 functions as the Proton donor in the catalytic mechanism. (R)-pantoate is bound at residue Gln74. Gln74 lines the beta-alanine pocket. 162–165 (GQKD) lines the ATP pocket. Residue Gln168 participates in (R)-pantoate binding. ATP contacts are provided by residues Ile191 and 199-202 (KSSR).

The protein belongs to the pantothenate synthetase family. As to quaternary structure, homodimer.

It is found in the cytoplasm. It catalyses the reaction (R)-pantoate + beta-alanine + ATP = (R)-pantothenate + AMP + diphosphate + H(+). It participates in cofactor biosynthesis; (R)-pantothenate biosynthesis; (R)-pantothenate from (R)-pantoate and beta-alanine: step 1/1. Its function is as follows. Catalyzes the condensation of pantoate with beta-alanine in an ATP-dependent reaction via a pantoyl-adenylate intermediate. The protein is Pantoate--beta-alanine ligase (panC) of Dictyostelium discoideum (Social amoeba).